The chain runs to 398 residues: Argininosuccinate synthase (398 aa).

9–17 (AYSGGLDTS) is an ATP binding site. L-citrulline-binding residues include Tyr87 and Ser92. Residue Gly117 coordinates ATP. 3 residues coordinate L-aspartate: Thr119, Asn123, and Asp124. Asn123 lines the L-citrulline pocket. Positions 127, 176, 185, 261, and 273 each coordinate L-citrulline.

This sequence belongs to the argininosuccinate synthase family. Type 1 subfamily. In terms of assembly, homotetramer.

Its subcellular location is the cytoplasm. It carries out the reaction L-citrulline + L-aspartate + ATP = 2-(N(omega)-L-arginino)succinate + AMP + diphosphate + H(+). Its pathway is amino-acid biosynthesis; L-arginine biosynthesis; L-arginine from L-ornithine and carbamoyl phosphate: step 2/3. The chain is Argininosuccinate synthase from Clostridium tetani (strain Massachusetts / E88).